The primary structure comprises 238 residues: MDVPTSSTDSQEVKPIMPIRTKAACKFYPPHILCGKGAKTNKRGKRGGAQKASTKKDIGETTPPVAKKSKVAKEPTMLAAAAAPEAAASPESSAAAAAPEAAASPESSAAAAAPEAAASPESSAAAAAPEAAASLESSAAAAAPEAAAAPATPAAPEAAAAPEVAAAPATPAAPEATAAPAAPEAATTPAAPEAPAAAPAVEEEEMVWEAAAVVGEAAVKPPEEEPTSGEAVATTTMT.

A disordered region spans residues 35–238 (GKGAKTNKRG…GEAVATTTMT (204 aa)). Residues 39-48 (KTNKRGKRGG) are compositionally biased toward basic residues. Repeat copies occupy residues 79–93 (AAAA…PESS), 94–108 (AAAA…PESS), 109–123 (AAAA…PESS), 124–138 (AAAA…LESS), 153–158 (PAAPEA), 171–176 (PAAPEA), 180–185 (PAAPEA), and 189–194 (PAAPEA). The interval 79 to 148 (AAAAAPEAAA…AAAAAPEAAA (70 aa)) is 4 X 15 AA tandem repeats of A-A-A-A-A-P-E-A-A-A-S-[PL]-E-S-S. Low complexity-rich tracts occupy residues 79 to 200 (AAAA…AAPA) and 208 to 220 (WEAA…AAVK). A 4 X 6 AA repeats of P-A-A-P-E-A region spans residues 153 to 194 (PAAPEAAAAPEVAAAPATPAAPEATAAPAAPEAATTPAAPEA).

Specifically expressed in testis (at protein level).

The protein resides in the cytoplasm. The protein localises to the nucleus. It is found in the nucleoplasm. The polypeptide is Testis-specific gene A8 protein (Mus musculus (Mouse)).